The primary structure comprises 271 residues: Acyl-[acyl-carrier-protein]--UDP-N-acetylglucosamine O-acyltransferase (271 aa).

This sequence belongs to the transferase hexapeptide repeat family. LpxA subfamily. Homotrimer.

It is found in the cytoplasm. It carries out the reaction a (3R)-hydroxyacyl-[ACP] + UDP-N-acetyl-alpha-D-glucosamine = a UDP-3-O-[(3R)-3-hydroxyacyl]-N-acetyl-alpha-D-glucosamine + holo-[ACP]. The protein operates within glycolipid biosynthesis; lipid IV(A) biosynthesis; lipid IV(A) from (3R)-3-hydroxytetradecanoyl-[acyl-carrier-protein] and UDP-N-acetyl-alpha-D-glucosamine: step 1/6. Involved in the biosynthesis of lipid A, a phosphorylated glycolipid that anchors the lipopolysaccharide to the outer membrane of the cell. This Sulfurihydrogenibium sp. (strain YO3AOP1) protein is Acyl-[acyl-carrier-protein]--UDP-N-acetylglucosamine O-acyltransferase.